Reading from the N-terminus, the 122-residue chain is Large ribosomal subunit protein bL19c (122 aa).

It belongs to the bacterial ribosomal protein bL19 family.

The protein resides in the plastid. The protein localises to the chloroplast. The protein is Large ribosomal subunit protein bL19c (rpl19) of Rhodomonas salina (Cryptomonas salina).